The primary structure comprises 453 residues: Ribosomal protein uS12 methylthiotransferase RimO (453 aa).

The 116-residue stretch at 5–120 folds into the MTTase N-terminal domain; it reads PKVGFVSLGC…VMQAVHSHLP (116 aa). Residues cysteine 14, cysteine 50, cysteine 79, cysteine 151, cysteine 155, and cysteine 158 each coordinate [4Fe-4S] cluster. The Radical SAM core domain occupies 137-383; sequence LTPRHYAYLK…EVAEEVSAHR (247 aa). A TRAM domain is found at 385-453; the sequence is QRKVGKTLKV…ADGHDLWGEV (69 aa).

This sequence belongs to the methylthiotransferase family. RimO subfamily. [4Fe-4S] cluster is required as a cofactor.

It is found in the cytoplasm. The enzyme catalyses L-aspartate(89)-[ribosomal protein uS12]-hydrogen + (sulfur carrier)-SH + AH2 + 2 S-adenosyl-L-methionine = 3-methylsulfanyl-L-aspartate(89)-[ribosomal protein uS12]-hydrogen + (sulfur carrier)-H + 5'-deoxyadenosine + L-methionine + A + S-adenosyl-L-homocysteine + 2 H(+). Its function is as follows. Catalyzes the methylthiolation of an aspartic acid residue of ribosomal protein uS12. The polypeptide is Ribosomal protein uS12 methylthiotransferase RimO (Burkholderia cenocepacia (strain ATCC BAA-245 / DSM 16553 / LMG 16656 / NCTC 13227 / J2315 / CF5610) (Burkholderia cepacia (strain J2315))).